A 113-amino-acid chain; its full sequence is ATP-dependent Clp protease adapter protein ClpS (113 aa).

The protein belongs to the ClpS family. In terms of assembly, binds to the N-terminal domain of the chaperone ClpA.

Functionally, involved in the modulation of the specificity of the ClpAP-mediated ATP-dependent protein degradation. The sequence is that of ATP-dependent Clp protease adapter protein ClpS from Leptospira biflexa serovar Patoc (strain Patoc 1 / Ames).